A 168-amino-acid chain; its full sequence is Large ribosomal subunit protein uL10 (168 aa).

The protein belongs to the universal ribosomal protein uL10 family. As to quaternary structure, part of the ribosomal stalk of the 50S ribosomal subunit. The N-terminus interacts with L11 and the large rRNA to form the base of the stalk. The C-terminus forms an elongated spine to which L12 dimers bind in a sequential fashion forming a multimeric L10(L12)X complex.

Forms part of the ribosomal stalk, playing a central role in the interaction of the ribosome with GTP-bound translation factors. The sequence is that of Large ribosomal subunit protein uL10 from Acinetobacter baylyi (strain ATCC 33305 / BD413 / ADP1).